Reading from the N-terminus, the 349-residue chain is D-alanine--D-alanine ligase (349 aa).

The ATP-grasp domain maps to 132–335; that stretch reads KHVFEAVGVP…YSDLIEKLVD (204 aa). 162 to 217 contacts ATP; the sequence is VEKLEFPVFVKPANMGSSVGISKVDDLADLQPALSEAYKYDNRVVIEQGVDAREIE. Mg(2+) is bound by residues Asp-289, Glu-302, and Asn-304.

This sequence belongs to the D-alanine--D-alanine ligase family. It depends on Mg(2+) as a cofactor. The cofactor is Mn(2+).

Its subcellular location is the cytoplasm. The catalysed reaction is 2 D-alanine + ATP = D-alanyl-D-alanine + ADP + phosphate + H(+). The protein operates within cell wall biogenesis; peptidoglycan biosynthesis. Its function is as follows. Cell wall formation. The sequence is that of D-alanine--D-alanine ligase from Lactococcus lactis subsp. lactis (strain IL1403) (Streptococcus lactis).